Consider the following 207-residue polypeptide: ATP phosphoribosyltransferase (207 aa).

This sequence belongs to the ATP phosphoribosyltransferase family. Short subfamily. Heteromultimer composed of HisG and HisZ subunits.

Its subcellular location is the cytoplasm. It catalyses the reaction 1-(5-phospho-beta-D-ribosyl)-ATP + diphosphate = 5-phospho-alpha-D-ribose 1-diphosphate + ATP. Its pathway is amino-acid biosynthesis; L-histidine biosynthesis; L-histidine from 5-phospho-alpha-D-ribose 1-diphosphate: step 1/9. Functionally, catalyzes the condensation of ATP and 5-phosphoribose 1-diphosphate to form N'-(5'-phosphoribosyl)-ATP (PR-ATP). Has a crucial role in the pathway because the rate of histidine biosynthesis seems to be controlled primarily by regulation of HisG enzymatic activity. This is ATP phosphoribosyltransferase (hisG) from Dictyoglomus turgidum (strain DSM 6724 / Z-1310).